The sequence spans 271 residues: 4-hydroxy-tetrahydrodipicolinate reductase (271 aa).

NAD(+) is bound by residues 10-15 (GAGGRM), Glu36, 100-102 (GTT), and 124-127 (SGNM). The Proton donor/acceptor role is filled by His157. His158 contacts (S)-2,3,4,5-tetrahydrodipicolinate. Residue Lys161 is the Proton donor of the active site. Residue 167–168 (GT) participates in (S)-2,3,4,5-tetrahydrodipicolinate binding.

It belongs to the DapB family.

The protein localises to the cytoplasm. The enzyme catalyses (S)-2,3,4,5-tetrahydrodipicolinate + NAD(+) + H2O = (2S,4S)-4-hydroxy-2,3,4,5-tetrahydrodipicolinate + NADH + H(+). It carries out the reaction (S)-2,3,4,5-tetrahydrodipicolinate + NADP(+) + H2O = (2S,4S)-4-hydroxy-2,3,4,5-tetrahydrodipicolinate + NADPH + H(+). The protein operates within amino-acid biosynthesis; L-lysine biosynthesis via DAP pathway; (S)-tetrahydrodipicolinate from L-aspartate: step 4/4. Its function is as follows. Catalyzes the conversion of 4-hydroxy-tetrahydrodipicolinate (HTPA) to tetrahydrodipicolinate. The chain is 4-hydroxy-tetrahydrodipicolinate reductase from Rhodopseudomonas palustris (strain BisB5).